The sequence spans 979 residues: UPF0182 protein Rv0064 (979 aa).

7 helical membrane passes run 19–41 (LVTA…DIYV), 63–85 (LAIV…LLAY), 114–136 (LFGW…FDWV), 174–196 (WLFV…FGGL), 208–230 (AARV…AYWL), 261–280 (LVLV…AIFL), and 285–307 (IPAM…WPLL). The segment at 898 to 948 (GTGRVATARGGDAASAPPPGAGGPAPPQAVPPPRTTQPPAAPPRGPDVPPA) is disordered. Residues 913-946 (APPPGAGGPAPPQAVPPPRTTQPPAAPPRGPDVP) show a composition bias toward pro residues.

It belongs to the UPF0182 family.

It is found in the cell membrane. This Mycobacterium tuberculosis (strain ATCC 25618 / H37Rv) protein is UPF0182 protein Rv0064.